The sequence spans 193 residues: MTVTTASGQWTFPVLFATLLVGSALVFPVGGLVWSAIASLAIAYLYYLVVEQHPHVGFALQLLALVVVARAKSWWRQACSGSWLASIVRRRKPTLTVDEYRSTLTYWDPVNKKWYIYTFAHGQRSTDLLIFRDENKRDVTPLVEPLLGPLQNFHGASPTPADLGFARLHVFRDGETSYQRQFDRHEPLVLTPH.

2 consecutive transmembrane segments (helical) span residues 14–34 (VLFATLLVGSALVFPVGGLVW) and 48–68 (LVVEQHPHVGFALQLLALVVV).

Belongs to the IIV-6 357R family.

Its subcellular location is the membrane. The chain is Transmembrane protein 066L from Invertebrate iridescent virus 3 (IIV-3).